The sequence spans 658 residues: Squalene--hopene cyclase (658 aa).

A PFTB 1 repeat occupies 69–110 (EAKIGRYLRRIQGEHGGWSLFYGGDLDLSATVKAYFALKMIG). D392 serves as the catalytic Proton donor. PFTB repeat units lie at residues 418 to 459 (KARA…GALL), 486 to 526 (MKAA…NVAA), and 534 to 584 (IQKA…GLMA).

The protein belongs to the terpene cyclase/mutase family.

It localises to the cell membrane. The catalysed reaction is squalene = hop-22(29)-ene. It catalyses the reaction squalene + H2O = hopan-22-ol. It functions in the pathway secondary metabolite biosynthesis; hopanoid biosynthesis. Functionally, catalyzes the cyclization of squalene into hopene. This Zymomonas mobilis subsp. mobilis (strain ATCC 31821 / ZM4 / CP4) protein is Squalene--hopene cyclase (shc).